A 435-amino-acid chain; its full sequence is Serine--tRNA ligase (435 aa).

Residue 242 to 244 participates in L-serine binding; the sequence is TAE. Residue 273 to 275 coordinates ATP; that stretch reads RSE. E296 provides a ligand contact to L-serine. 360 to 363 contacts ATP; it reads EISS. S396 serves as a coordination point for L-serine.

The protein belongs to the class-II aminoacyl-tRNA synthetase family. Type-1 seryl-tRNA synthetase subfamily. As to quaternary structure, homodimer. The tRNA molecule binds across the dimer.

It localises to the cytoplasm. The catalysed reaction is tRNA(Ser) + L-serine + ATP = L-seryl-tRNA(Ser) + AMP + diphosphate + H(+). It carries out the reaction tRNA(Sec) + L-serine + ATP = L-seryl-tRNA(Sec) + AMP + diphosphate + H(+). It participates in aminoacyl-tRNA biosynthesis; selenocysteinyl-tRNA(Sec) biosynthesis; L-seryl-tRNA(Sec) from L-serine and tRNA(Sec): step 1/1. Catalyzes the attachment of serine to tRNA(Ser). Is also able to aminoacylate tRNA(Sec) with serine, to form the misacylated tRNA L-seryl-tRNA(Sec), which will be further converted into selenocysteinyl-tRNA(Sec). In Aliivibrio salmonicida (strain LFI1238) (Vibrio salmonicida (strain LFI1238)), this protein is Serine--tRNA ligase.